We begin with the raw amino-acid sequence, 358 residues long: 3-dehydroquinate synthase (358 aa).

Residues 75-80 (SGEGSK), 109-113 (GVLGD), 133-134 (TT), Lys-146, and Lys-155 each bind NAD(+). The Zn(2+) site is built by Glu-188, His-245, and His-262.

The protein belongs to the sugar phosphate cyclases superfamily. Dehydroquinate synthase family. It depends on Co(2+) as a cofactor. Zn(2+) is required as a cofactor. Requires NAD(+) as cofactor.

It is found in the cytoplasm. It catalyses the reaction 7-phospho-2-dehydro-3-deoxy-D-arabino-heptonate = 3-dehydroquinate + phosphate. Its pathway is metabolic intermediate biosynthesis; chorismate biosynthesis; chorismate from D-erythrose 4-phosphate and phosphoenolpyruvate: step 2/7. Functionally, catalyzes the conversion of 3-deoxy-D-arabino-heptulosonate 7-phosphate (DAHP) to dehydroquinate (DHQ). The chain is 3-dehydroquinate synthase from Methylacidiphilum infernorum (isolate V4) (Methylokorus infernorum (strain V4)).